We begin with the raw amino-acid sequence, 612 residues long: Putative zinc metalloproteinase C607.06c (612 aa).

His-303 lines the Zn(2+) pocket. The active site involves Glu-304. 2 residues coordinate Zn(2+): His-307 and His-313. The region spanning 477–612 is the Jacalin-type lectin domain; it reads VYRSERYGLR…FMDSIGFFIK (136 aa).

Belongs to the peptidase M10B family. It depends on Zn(2+) as a cofactor.

The protein is Putative zinc metalloproteinase C607.06c of Schizosaccharomyces pombe (strain 972 / ATCC 24843) (Fission yeast).